A 280-amino-acid polypeptide reads, in one-letter code: Divalent cation/proton antiporter GDT1 (280 aa).

The Cytoplasmic segment spans residues 1-3; it reads MGN. The helical transmembrane segment at 4–24 threads the bilayer; that stretch reads MIKKASLIALLPLFTAAAAAA. Over 25–45 the chain is Vacuolar; that stretch reads TDAETSMESGSSSHLKSFLMS. Residues 46–66 form a helical membrane-spanning segment; sequence VSMIGLSEIGDKTFLIAALMA. Residues 67–71 lie on the Cytoplasmic side of the membrane; the sequence is MRHKR. A helical transmembrane segment spans residues 72–92; the sequence is VLVFSAAATSLAIMTILSGVV. Over 93–104 the chain is Vacuolar; sequence GHSAVAFLSERY. A helical transmembrane segment spans residues 105–125; the sequence is TAFFAGILFLVFGYKLTMEGL. Over 126 to 183 the chain is Cytoplasmic; it reads EMSKDAGVEEEMAEVEEEIAIKDMNQDMDDVEKGGDTAYDKQLKNASIGKKIVHRIRE. Residues 184–204 traverse the membrane as a helical segment; that stretch reads LASFMFSPVWVQIFLMVFLGE. Over 205-222 the chain is Vacuolar; it reads LGDRSQISIIAMATDSDY. The chain crosses the membrane as a helical span at residues 223-243; sequence WYVIAGAVIGHAICSGLAVVG. At 244–255 the chain is on the cytoplasmic side; the sequence is GKLLATRISIRT. The helical transmembrane segment at 256 to 276 threads the bilayer; that stretch reads ITLASSLLFFIFALMYIYQAF. At 277–280 the chain is on the vacuolar side; the sequence is TTQD.

Belongs to the GDT1 family.

It localises to the golgi apparatus. Its subcellular location is the cis-Golgi network membrane. It catalyses the reaction Ca(2+)(in) + n H(+)(out) = Ca(2+)(out) + n H(+)(in). The catalysed reaction is Mn(2+)(in) + n H(+)(out) = Mn(2+)(out) + n H(+)(in). Functionally, divalent cation:proton antiporter that exchanges calcium or manganese ions for protons across the Golgi membrane. Mediates the reversible transport of calcium or manganese to the Golgi lumen driven by the proton gradient and possibly the membrane potential generated by V-ATPase. Provides calcium or manganese cofactors to resident Golgi enzymes and contributes to the maintenance of an acidic luminal Golgi pH required for proper functioning of the secretory pathway. The transport stoichiometry remains to be elucidated. The chain is Divalent cation/proton antiporter GDT1 from Saccharomyces cerevisiae (strain ATCC 204508 / S288c) (Baker's yeast).